Here is a 251-residue protein sequence, read N- to C-terminus: UPF0309 protein SAV_3856 (251 aa).

Residues 36–220 form the SIS domain; that stretch reads IADTVADGGR…AGTLADRGIE (185 aa).

This sequence belongs to the UPF0309 family.

The polypeptide is UPF0309 protein SAV_3856 (Streptomyces avermitilis (strain ATCC 31267 / DSM 46492 / JCM 5070 / NBRC 14893 / NCIMB 12804 / NRRL 8165 / MA-4680)).